The primary structure comprises 426 residues: Tyrosine--tRNA ligase (426 aa).

Tyr-35 is an L-tyrosine binding site. The 'HIGH' region motif lies at 40-49 (PTAPSLHIGH). 2 residues coordinate L-tyrosine: Tyr-174 and Gln-178. A 'KMSKS' region motif is present at residues 234–238 (KFGKT). Lys-237 contributes to the ATP binding site. Residues 358-418 (PRVVDALVAT…WAVIRRGRRA (61 aa)) form the S4 RNA-binding domain.

Belongs to the class-I aminoacyl-tRNA synthetase family. TyrS type 1 subfamily. As to quaternary structure, homodimer.

Its subcellular location is the cytoplasm. It carries out the reaction tRNA(Tyr) + L-tyrosine + ATP = L-tyrosyl-tRNA(Tyr) + AMP + diphosphate + H(+). In terms of biological role, catalyzes the attachment of tyrosine to tRNA(Tyr) in a two-step reaction: tyrosine is first activated by ATP to form Tyr-AMP and then transferred to the acceptor end of tRNA(Tyr). This Acidothermus cellulolyticus (strain ATCC 43068 / DSM 8971 / 11B) protein is Tyrosine--tRNA ligase.